A 919-amino-acid polypeptide reads, in one-letter code: Probable dipeptidyl-aminopeptidase B (919 aa).

Residues 1 to 10 (MRRSDGHEET) are compositionally biased toward basic and acidic residues. The segment at 1–53 (MRRSDGHEETSEFLPMTHSRSVSAASQTSTDSSLSTESLFPREQKPFPNAMGG) is disordered. At 1-92 (MRRSDGHEET…AATGGGRARR (92 aa)) the chain is on the cytoplasmic side. Residues 21–38 (SVSAASQTSTDSSLSTES) show a composition bias toward low complexity. The helical; Signal-anchor for type II membrane protein transmembrane segment at 93–113 (IFWILVLLCLGGWLLAFVLFL) threads the bilayer. Topologically, residues 114-919 (TGGRANYQTA…MKRSLRLLSP (806 aa)) are vacuolar. N-linked (GlcNAc...) asparagine glycans are attached at residues Asn-200, Asn-352, and Asn-643. Ser-757 (charge relay system) is an active-site residue. Asn-811 carries an N-linked (GlcNAc...) asparagine glycan. Residues Asp-834 and His-867 each act as charge relay system in the active site.

This sequence belongs to the peptidase S9B family.

It localises to the vacuole membrane. The enzyme catalyses Release of an N-terminal dipeptide, Xaa-Yaa-|-Zaa-, from a polypeptide, preferentially when Yaa is Pro, provided Zaa is neither Pro nor hydroxyproline.. Its function is as follows. Type IV dipeptidyl-peptidase which removes N-terminal dipeptides sequentially from polypeptides having unsubstituted N-termini provided that the penultimate residue is proline. In Aspergillus fumigatus (strain CBS 144.89 / FGSC A1163 / CEA10) (Neosartorya fumigata), this protein is Probable dipeptidyl-aminopeptidase B (dapB).